A 47-amino-acid chain; its full sequence is Large ribosomal subunit protein bL33C (47 aa).

This sequence belongs to the bacterial ribosomal protein bL33 family.

The sequence is that of Large ribosomal subunit protein bL33C from Staphylococcus epidermidis (strain ATCC 35984 / DSM 28319 / BCRC 17069 / CCUG 31568 / BM 3577 / RP62A).